Reading from the N-terminus, the 141-residue chain is Nucleoside diphosphate kinase (141 aa).

Positions 9, 57, 85, 91, 102, and 112 each coordinate ATP. H115 (pros-phosphohistidine intermediate) is an active-site residue.

It belongs to the NDK family. Homotetramer. Mg(2+) serves as cofactor.

The protein resides in the cytoplasm. The enzyme catalyses a 2'-deoxyribonucleoside 5'-diphosphate + ATP = a 2'-deoxyribonucleoside 5'-triphosphate + ADP. It carries out the reaction a ribonucleoside 5'-diphosphate + ATP = a ribonucleoside 5'-triphosphate + ADP. Functionally, major role in the synthesis of nucleoside triphosphates other than ATP. The ATP gamma phosphate is transferred to the NDP beta phosphate via a ping-pong mechanism, using a phosphorylated active-site intermediate. The sequence is that of Nucleoside diphosphate kinase from Chlamydia felis (strain Fe/C-56) (Chlamydophila felis).